Here is a 364-residue protein sequence, read N- to C-terminus: Putative galactoside 2-alpha-L-fucosyltransferase svh-11 (364 aa).

Residues 1–19 (MRLFHFLKFLTINNFSRYC) are Cytoplasmic-facing. The helical; Signal-anchor for type II membrane protein transmembrane segment at 20-42 (LKIVKVHIIWITIICIIYFNWRF) threads the bilayer. Residues 43–364 (KKLDFMAIPY…SANSFTVVRS (322 aa)) are Lumenal-facing. Asn60 and Asn128 each carry an N-linked (GlcNAc...) asparagine glycan.

Belongs to the glycosyltransferase 11 family.

It is found in the golgi apparatus. Its subcellular location is the golgi stack membrane. Mediates the transfer of fucose to the terminal galactose on glycan chains of cell surface glycoproteins and glycolipids. Required for axon regeneration after injury. The sequence is that of Putative galactoside 2-alpha-L-fucosyltransferase svh-11 from Caenorhabditis elegans.